Consider the following 468-residue polypeptide: Uronate isomerase (468 aa).

Belongs to the metallo-dependent hydrolases superfamily. Uronate isomerase family.

The enzyme catalyses D-glucuronate = D-fructuronate. The catalysed reaction is aldehydo-D-galacturonate = keto-D-tagaturonate. The protein operates within carbohydrate metabolism; pentose and glucuronate interconversion. In Marinomonas sp. (strain MWYL1), this protein is Uronate isomerase.